A 138-amino-acid chain; its full sequence is Oleosin G (138 aa).

The next 3 membrane-spanning stretches (helical) occupy residues 14–34, 48–68, and 69–89; these read ILGF…TGLT, VLIF…VAVA, and GFLS…WLYN. The Proline-knot signature appears at 47–58; that stretch reads PVLIFFSPILIP.

This sequence belongs to the oleosin family. Expressed in megagametophytes (at protein level).

The protein resides in the lipid droplet. It is found in the membrane. This chain is Oleosin G, found in Pinus massoniana (Chinese red pine).